The following is a 322-amino-acid chain: Phosphoenolpyruvate transferase (322 aa).

Asp58 lines the 7,8-didemethyl-8-hydroxy-5-deazariboflavin pocket.

This sequence belongs to the CofD family. As to quaternary structure, homodimer. Requires Mg(2+) as cofactor.

The enzyme catalyses enolpyruvoyl-2-diphospho-5'-guanosine + 7,8-didemethyl-8-hydroxy-5-deazariboflavin = dehydro coenzyme F420-0 + GMP + H(+). Its pathway is cofactor biosynthesis; coenzyme F420 biosynthesis. Functionally, catalyzes the transfer of the phosphoenolpyruvate moiety from enoylpyruvoyl-2-diphospho-5'-guanosine (EPPG) to 7,8-didemethyl-8-hydroxy-5-deazariboflavin (FO) with the formation of dehydro coenzyme F420-0 and GMP. The sequence is that of Phosphoenolpyruvate transferase from Thermobifida fusca (strain YX).